The sequence spans 525 residues: GMP synthase [glutamine-hydrolyzing] (525 aa).

A Glutamine amidotransferase type-1 domain is found at 9–207; that stretch reads RILILDFGSQ…VRDICQCEAL (199 aa). The Nucleophile role is filled by cysteine 86. Residues histidine 181 and glutamate 183 contribute to the active site. The GMPS ATP-PPase domain maps to 208-400; that stretch reads WTPAKIIDDA…LGLPYDMLYR (193 aa). 235 to 241 contributes to the ATP binding site; it reads SGGVDSS.

In terms of assembly, homodimer.

It carries out the reaction XMP + L-glutamine + ATP + H2O = GMP + L-glutamate + AMP + diphosphate + 2 H(+). It functions in the pathway purine metabolism; GMP biosynthesis; GMP from XMP (L-Gln route): step 1/1. Catalyzes the synthesis of GMP from XMP. This is GMP synthase [glutamine-hydrolyzing] from Shigella boydii serotype 18 (strain CDC 3083-94 / BS512).